A 342-amino-acid chain; its full sequence is Fructose-1,6-bisphosphatase class 1 (342 aa).

The Mg(2+) site is built by E97, D119, L121, and D122. Residues 122 to 125 (DGSS), N215, Y247, and K280 each bind substrate. E286 contributes to the Mg(2+) binding site.

The protein belongs to the FBPase class 1 family. As to quaternary structure, homotetramer. It depends on Mg(2+) as a cofactor.

It is found in the cytoplasm. The enzyme catalyses beta-D-fructose 1,6-bisphosphate + H2O = beta-D-fructose 6-phosphate + phosphate. Its pathway is carbohydrate biosynthesis; gluconeogenesis. This Leptospira interrogans serogroup Icterohaemorrhagiae serovar copenhageni (strain Fiocruz L1-130) protein is Fructose-1,6-bisphosphatase class 1.